We begin with the raw amino-acid sequence, 259 residues long: Deoxyribose-phosphate aldolase (259 aa).

Asp102 functions as the Proton donor/acceptor in the catalytic mechanism. Lys167 serves as the catalytic Schiff-base intermediate with acetaldehyde. Lys201 functions as the Proton donor/acceptor in the catalytic mechanism.

It belongs to the DeoC/FbaB aldolase family. DeoC type 2 subfamily.

The protein resides in the cytoplasm. The catalysed reaction is 2-deoxy-D-ribose 5-phosphate = D-glyceraldehyde 3-phosphate + acetaldehyde. It functions in the pathway carbohydrate degradation; 2-deoxy-D-ribose 1-phosphate degradation; D-glyceraldehyde 3-phosphate and acetaldehyde from 2-deoxy-alpha-D-ribose 1-phosphate: step 2/2. In terms of biological role, catalyzes a reversible aldol reaction between acetaldehyde and D-glyceraldehyde 3-phosphate to generate 2-deoxy-D-ribose 5-phosphate. The chain is Deoxyribose-phosphate aldolase from Escherichia coli O45:K1 (strain S88 / ExPEC).